The sequence spans 197 residues: Amino-terminal enhancer of split (197 aa).

A compositionally biased stretch (low complexity) spans 1-15 (MMFPQSSSRHSGSSH). Disordered regions lie at residues 1 to 20 (MMFPQSSSRHSGSSHMPQQL) and 169 to 197 (LGSQGHLPKEDKNGHEGDRRPDDDGDKSD). The tract at residues 166 to 197 (LSALGSQGHLPKEDKNGHEGDRRPDDDGDKSD) is CCN domain. The span at 175–197 (LPKEDKNGHEGDRRPDDDGDKSD) shows a compositional bias: basic and acidic residues.

The protein belongs to the WD repeat Groucho/TLE family. In terms of assembly, monomer. Ubiquitinated by XIAP/BIRC4. Predominantly expressed in brain, testis and ovary. Ubiquitously expressed in the developing embryo. Present in unfertilized and fertilized eggs.

It localises to the nucleus. Functionally, may act as a transcriptional corepressor. Has a possible role in the negative regulation of proteins containing WD-40 repeats. May be required for the initiation and maintenance of the differentiated state. This is Amino-terminal enhancer of split (aes) from Xenopus laevis (African clawed frog).